The following is a 367-amino-acid chain: Peroxisome biogenesis protein 16 (367 aa).

Residues 135–173 (GGETPNEEKDSNQSESQNRAGNSGRNLGPHGLGNQNHHN) are disordered. The span at 147–159 (QSESQNRAGNSGR) shows a compositional bias: polar residues. 2 helical membrane passes run 237–257 (ALFAIGEVLYITRPLIYVLFI) and 264–284 (SWIPWAISLSVDTLGMGLLAN).

This sequence belongs to the peroxin-16 family. As to quaternary structure, interacts with APEM9 (via both N- and C-terminus). The detection of an additional immunorelated polypeptide of 52 kDa suggests a post-translational modification of PEX16. In terms of tissue distribution, expressed in roots, siliques, seeds, cotyledons, leaves and flowers. Low expression in leaves and roots.

Its subcellular location is the peroxisome membrane. It localises to the endoplasmic reticulum membrane. In terms of biological role, involved in the formation of peroxisomes, lipid bodies and protein bodies. This chain is Peroxisome biogenesis protein 16, found in Arabidopsis thaliana (Mouse-ear cress).